The sequence spans 224 residues: Fibronectin type III domain-containing protein 9 (224 aa).

Residues 1-101 enclose the Fibronectin type-III domain; sequence MNIEVGNISY…FHTLDKSPLA (101 aa). The chain crosses the membrane as a helical span at residues 113–133; sequence LWVLMAILLACFTAVLAFICL. The segment at 175-224 is disordered; sequence LQGLPLVEMPRKNSRDGAELDPEANQDAPDAGALQRGGGDPPAILPHCGE. A compositionally biased stretch (basic and acidic residues) spans 183-192; the sequence is MPRKNSRDGA.

It localises to the membrane. The sequence is that of Fibronectin type III domain-containing protein 9 (FNDC9) from Homo sapiens (Human).